The chain runs to 403 residues: Protein WVD2-like 6 (403 aa).

2 disordered regions span residues 1–179 (MDSE…ALPN) and 254–403 (LKKI…AVEP). Residues 25–56 (GDSSNGNGGTSENLECCSTQHPMEASEGTQNE) are compositionally biased toward polar residues. A compositionally biased stretch (low complexity) spans 103–118 (SVAPNVKPVKSPKSKS). The residue at position 113 (S113) is a Phosphoserine. Basic and acidic residues-rich tracts occupy residues 120-132 (NGREAHVTKHGNH), 139-153 (GTRDKPKLRETRKQV), and 162-171 (QYPKEDDGKP). The span at 263–273 (KSPKLGRKKTN) shows a compositional bias: basic residues. The segment covering 336–348 (KVAPAKAVTASTK) has biased composition (low complexity). Residues 385 to 394 (VNEDRNESHM) show a composition bias toward basic and acidic residues.

Belongs to the TPX2 family. Expressed in seedlings.

It localises to the cytoplasm. It is found in the cytoskeleton. In terms of biological role, microtubule-associated protein (MAP) that regulates the orientation of interphase cortical microtubules. This is Protein WVD2-like 6 from Arabidopsis thaliana (Mouse-ear cress).